The primary structure comprises 364 residues: Cobalt-precorrin-5B C(1)-methyltransferase (364 aa).

Belongs to the CbiD family.

It carries out the reaction Co-precorrin-5B + S-adenosyl-L-methionine = Co-precorrin-6A + S-adenosyl-L-homocysteine. The protein operates within cofactor biosynthesis; adenosylcobalamin biosynthesis; cob(II)yrinate a,c-diamide from sirohydrochlorin (anaerobic route): step 6/10. Its function is as follows. Catalyzes the methylation of C-1 in cobalt-precorrin-5B to form cobalt-precorrin-6A. The chain is Cobalt-precorrin-5B C(1)-methyltransferase from Pseudomonas putida (strain W619).